Consider the following 353-residue polypeptide: Pleckstrin-2 (353 aa).

N-acetylmethionine is present on Met-1. The region spanning 4–104 (GVLKEGFLVK…WAFEITGAIH (101 aa)) is the PH 1 domain. Ser-120 carries the phosphoserine modification. Positions 139 to 225 (TSTGIRPSPN…DSTALYTFAE (87 aa)) constitute a DEP domain. In terms of domain architecture, PH 2 spans 247-353 (TVVKQGYLSK…EWIEAIKKLT (107 aa)).

As to expression, ubiquitous. Most abundant in the thymus, large bowel, small bowel, stomach, and prostate.

The protein localises to the cell projection. Its subcellular location is the lamellipodium membrane. It localises to the cytoplasm. The protein resides in the cytoskeleton. In terms of biological role, may help orchestrate cytoskeletal arrangement. Contribute to lamellipodia formation. Overexpression of pleckstrin 2 causes large lamellipodia and peripheral ruffle formation. In Mus musculus (Mouse), this protein is Pleckstrin-2 (Plek2).